We begin with the raw amino-acid sequence, 716 residues long: MIYQSPTIQVELLEDNIAKLCFNAPGSVNKFDRETLASLDAALDSIKQDSNIKALVLTSSKDTFIVGADITEFLGLFAQDDAVLLSWVEQANAVFNKLEDLPFPTASAIKGFALGGGCETILTTDFRIADTTAKIGLPETKLGIIPGFGGTVRLPRVIGADNALEWITTGKDQRAEDALKVGAVDAVVAPQALEAAAIQMLKDAVAEKLDWQARRNRKLSALTLPKLEAMMSFTTAKGMVFAVAGKHYPAPMAAVSVIEQASTKGRAEALQIEHQAFIKLAKTDVAKALIGIFLNDQFVKGKAKKAGKLAKEVNNAAVLGAGIMGGGIAYQSASKGTPIVMKDIAQPALDLGLNEAAKLLSAQVARGRSTPEKMAKVLNNITPSLDYAAIKHSDVVVEAVVEHPKIKAQVLAEVEGYVSEDAIIASNTSTISINLLAKSMKKPERFCGMHFFNPVHKMPLVEVIRGEHSSEETIASVVAYASKMGKTPIVVNDCPGFFVNRVLFPYFAGFNGLLAEGGDFAAIDKVMEKQFGWPMGPAYLLDVVGLDTGHHAQAVMAEGFPDRMGKSGTDAIDVMFENKRLGQKNGKGFYVYSVDSRGKPKKDVDPTSYGLLKDAFGELKAFEADDIIARTMIPMIIETVRCLEEGIVASPAEADMGLVYGLGFPPFRGGVFRYLDTMGVANFVALADKYAHLGGLYQVTDAMRTLAANNGSYYQA.

The enoyl-CoA hydratase/isomerase stretch occupies residues 1–189 (MIYQSPTIQV…KVGAVDAVVA (189 aa)). Residue aspartate 296 coordinates substrate. A 3-hydroxyacyl-CoA dehydrogenase region spans residues 311-716 (KEVNNAAVLG…AANNGSYYQA (406 aa)). Residues methionine 324, aspartate 343, 400-402 (VVE), lysine 407, and serine 429 each bind NAD(+). Histidine 450 (for 3-hydroxyacyl-CoA dehydrogenase activity) is an active-site residue. Asparagine 453 contributes to the NAD(+) binding site. The substrate site is built by asparagine 500 and tyrosine 660.

It in the N-terminal section; belongs to the enoyl-CoA hydratase/isomerase family. In the C-terminal section; belongs to the 3-hydroxyacyl-CoA dehydrogenase family. Heterotetramer of two alpha chains (FadB) and two beta chains (FadA).

It carries out the reaction a (3S)-3-hydroxyacyl-CoA + NAD(+) = a 3-oxoacyl-CoA + NADH + H(+). It catalyses the reaction a (3S)-3-hydroxyacyl-CoA = a (2E)-enoyl-CoA + H2O. The enzyme catalyses a 4-saturated-(3S)-3-hydroxyacyl-CoA = a (3E)-enoyl-CoA + H2O. The catalysed reaction is (3S)-3-hydroxybutanoyl-CoA = (3R)-3-hydroxybutanoyl-CoA. It carries out the reaction a (3Z)-enoyl-CoA = a 4-saturated (2E)-enoyl-CoA. It catalyses the reaction a (3E)-enoyl-CoA = a 4-saturated (2E)-enoyl-CoA. It functions in the pathway lipid metabolism; fatty acid beta-oxidation. Functionally, involved in the aerobic and anaerobic degradation of long-chain fatty acids via beta-oxidation cycle. Catalyzes the formation of 3-oxoacyl-CoA from enoyl-CoA via L-3-hydroxyacyl-CoA. It can also use D-3-hydroxyacyl-CoA and cis-3-enoyl-CoA as substrate. The sequence is that of Fatty acid oxidation complex subunit alpha from Shewanella baltica (strain OS223).